Consider the following 462-residue polypeptide: MTTNKTFSMVLAMTLNGGIGYQNRLPWKLKEDLQRFKKITTGGIVIMGRKTFESMNSKPLPNRVNVVISKNMKSSNEVQVFPRIEDALQFYNTSHQKLYLIGGKRIFEEGLATDKCSDVHLTRIGVETKCDVYLNKNIFSTFQVNKTSQTKSENGINYDYQHLINKNSHEQSYIDEEHQENQYLDMITKIMKEGVSKDDRTGVGTMSIFGQTMRFNLAQSFPLLTTKKVFFRGVVEELLWFLRGNTNGKLLLDKGVKIWEGNGTREYLDTIGLQHRQEHDLGPVYGFQWRHFGAKYKDCQTDYSNQGVDQVKEIIQLLKNNPDSRRIILSAWNPIDLKQMALPPCHVMSQFFVANGKLSCMMYQRSCDFGLGIPFNIASYALLTYMLAKECNLNLGEFVHVLGDTHIYSNHVEALKKQIERVPYPFPLLKIKGNKSLFDYTYEDFELVGYNAHDKIEMKMAV.

Positions 6–165 constitute a DHFR domain; that stretch reads TFSMVLAMTL…INYDYQHLIN (160 aa). V10 is a binding site for substrate. Residues A12 and 18-24 each bind NADP(+); that span reads GIGYQNR. D32 is a binding site for substrate. NADP(+) is bound by residues 49–51 and 68–71; these read RKT and ISKN. I101 provides a ligand contact to substrate. 102–109 contacts NADP(+); the sequence is GGKRIFEE. T122 contacts substrate. The segment at 180-462 is thymidylate synthase; it reads ENQYLDMITK…HDKIEMKMAV (283 aa). R200 provides a ligand contact to dUMP. C345 is an active-site residue. DUMP is bound by residues H346, 364 to 368, N376, and 406 to 408; these read QRSCD and HIY.

The protein in the N-terminal section; belongs to the dihydrofolate reductase family. This sequence in the C-terminal section; belongs to the thymidylate synthase family.

It catalyses the reaction (6S)-5,6,7,8-tetrahydrofolate + NADP(+) = 7,8-dihydrofolate + NADPH + H(+). It carries out the reaction dUMP + (6R)-5,10-methylene-5,6,7,8-tetrahydrofolate = 7,8-dihydrofolate + dTMP. It functions in the pathway cofactor biosynthesis; tetrahydrofolate biosynthesis; 5,6,7,8-tetrahydrofolate from 7,8-dihydrofolate: step 1/1. Functionally, bifunctional enzyme. Involved in de novo dTMP biosynthesis. Key enzyme in folate metabolism. Catalyzes an essential reaction for de novo glycine and purine synthesis, DNA precursor synthesis, and for the conversion of dUMP to dTMP. The sequence is that of Bifunctional dihydrofolate reductase-thymidylate synthase from Paramecium tetraurelia.